The chain runs to 337 residues: Glyceraldehyde-3-phosphate dehydrogenase 2 (337 aa).

NADP(+) is bound by residues 11 to 12 (RI), D35, R80, and T122. Residues 153–155 (SCT), T184, R199, 212–213 (TG), and R235 contribute to the D-glyceraldehyde 3-phosphate site. C154 acts as the Nucleophile in catalysis. Residue N317 coordinates NADP(+).

In terms of assembly, homotetramer.

It is found in the cytoplasm. The enzyme catalyses D-glyceraldehyde 3-phosphate + phosphate + NADP(+) = (2R)-3-phospho-glyceroyl phosphate + NADPH + H(+). It catalyses the reaction D-glyceraldehyde 3-phosphate + phosphate + NAD(+) = (2R)-3-phospho-glyceroyl phosphate + NADH + H(+). The protein operates within carbohydrate biosynthesis; Calvin cycle. Gap2 has a major role in carbon fixation as a component of the Calvin cycle. Catalyzes the oxidative phosphorylation of glyceraldehyde 3-phosphate (G3P) to 1,3-bisphosphoglycerate (BPG) using the cofactor NADP. The first reaction step involves the formation of a hemiacetal intermediate between G3P and a cysteine residue, and this hemiacetal intermediate is then oxidized to a thioester, with concomitant reduction of NADP to NADPH. The reduced NADPH is then exchanged with the second NAD, and the thioester is attacked by a nucleophilic inorganic phosphate to produce BPG. This chain is Glyceraldehyde-3-phosphate dehydrogenase 2 (gap2), found in Nostoc sp. (strain PCC 7120 / SAG 25.82 / UTEX 2576).